The primary structure comprises 34 residues: uncharacterized protein (34 aa).

This is an uncharacterized protein from Haemophilus influenzae (strain ATCC 51907 / DSM 11121 / KW20 / Rd).